The chain runs to 132 residues: Large ribosomal subunit protein uL14 (132 aa).

Belongs to the universal ribosomal protein uL14 family. In terms of assembly, part of the 50S ribosomal subunit. Forms a cluster with proteins L3 and L24e, part of which may contact the 16S rRNA in 2 intersubunit bridges.

Its function is as follows. Binds to 23S rRNA. Forms part of two intersubunit bridges in the 70S ribosome. The chain is Large ribosomal subunit protein uL14 from Methanococcus maripaludis (strain C7 / ATCC BAA-1331).